A 315-amino-acid polypeptide reads, in one-letter code: Probable cell division protein WhiA (315 aa).

The H-T-H motif DNA-binding region spans 277–311 (SLQELGAMMPSGQISKSGVNHRLRKLNQIAEGYQQ).

The protein belongs to the WhiA family.

Functionally, involved in cell division and chromosome segregation. This Lacticaseibacillus paracasei (strain ATCC 334 / BCRC 17002 / CCUG 31169 / CIP 107868 / KCTC 3260 / NRRL B-441) (Lactobacillus paracasei) protein is Probable cell division protein WhiA.